A 335-amino-acid chain; its full sequence is MGLAATKTKQRFGLDPRNTTWSNDKSRFGHKYLEKLGWEPGKGLGHASHAMSTHIKVTIKDDTMGLGAKLKKKEKKDEFDSGECAGLDVFQRILGRLNGKEEVIADELEKQRKENIINGKWGIHFVKGEVLSSTWDADTMQLKSYSYDKKEITADDAEDAKVSGKHRDRKSRAKREKSNNAALKEKCRDIDRTRKSKRKEKEQEKEKNREKKHNGKEHKEKEHKEKKDKKDKKEKKEKKEKKEKKEKKHKEKSNKRLRSSDSIDDPEATKPSKKSKTKAADSDNVTRDSMLQPRASAASPPPTISTRLSVRSKWIRQKRAAVMDPKALNEIFMVT.

Residues 25-71 (KSRFGHKYLEKLGWEPGKGLGHASHAMSTHIKVTIKDDTMGLGAKLK) enclose the G-patch domain. The interval 155–310 (DDAEDAKVSG…PPTISTRLSV (156 aa)) is disordered. Basic residues predominate over residues 163–175 (SGKHRDRKSRAKR). The span at 183 to 209 (LKEKCRDIDRTRKSKRKEKEQEKEKNR) shows a compositional bias: basic and acidic residues. Residues 226–257 (KKDKKDKKEKKEKKEKKEKKEKKHKEKSNKRL) are compositionally biased toward basic residues.

It belongs to the PINX1 family.

The protein localises to the nucleus. Its subcellular location is the nucleolus. Its function is as follows. Involved in rRNA-processing at A0, A1 and A2 sites and negatively regulates telomerase. This Eremothecium gossypii (strain ATCC 10895 / CBS 109.51 / FGSC 9923 / NRRL Y-1056) (Yeast) protein is Protein PXR1 (PXR1).